The sequence spans 168 residues: Phosphopantetheine adenylyltransferase (168 aa).

Residue serine 8 coordinates substrate. ATP contacts are provided by residues 8 to 9 (SF) and histidine 16. The substrate site is built by lysine 40, alanine 72, and arginine 86. Residues 87 to 89 (GLR), glutamate 97, and 122 to 128 (YSFLSSS) each bind ATP.

It belongs to the bacterial CoaD family. As to quaternary structure, homohexamer. The cofactor is Mg(2+).

The protein resides in the cytoplasm. The enzyme catalyses (R)-4'-phosphopantetheine + ATP + H(+) = 3'-dephospho-CoA + diphosphate. Its pathway is cofactor biosynthesis; coenzyme A biosynthesis; CoA from (R)-pantothenate: step 4/5. Its function is as follows. Reversibly transfers an adenylyl group from ATP to 4'-phosphopantetheine, yielding dephospho-CoA (dPCoA) and pyrophosphate. This chain is Phosphopantetheine adenylyltransferase, found in Trichodesmium erythraeum (strain IMS101).